Consider the following 155-residue polypeptide: 6,7-dimethyl-8-ribityllumazine synthase (155 aa).

5-amino-6-(D-ribitylamino)uracil contacts are provided by residues F23, 57 to 59 (AFE), and 81 to 83 (AVI). 86-87 (ST) contributes to the (2S)-2-hydroxy-3-oxobutyl phosphate binding site. Residue H89 is the Proton donor of the active site. F114 contributes to the 5-amino-6-(D-ribitylamino)uracil binding site. R128 is a (2S)-2-hydroxy-3-oxobutyl phosphate binding site.

Belongs to the DMRL synthase family.

The enzyme catalyses (2S)-2-hydroxy-3-oxobutyl phosphate + 5-amino-6-(D-ribitylamino)uracil = 6,7-dimethyl-8-(1-D-ribityl)lumazine + phosphate + 2 H2O + H(+). Its pathway is cofactor biosynthesis; riboflavin biosynthesis; riboflavin from 2-hydroxy-3-oxobutyl phosphate and 5-amino-6-(D-ribitylamino)uracil: step 1/2. Functionally, catalyzes the formation of 6,7-dimethyl-8-ribityllumazine by condensation of 5-amino-6-(D-ribitylamino)uracil with 3,4-dihydroxy-2-butanone 4-phosphate. This is the penultimate step in the biosynthesis of riboflavin. The protein is 6,7-dimethyl-8-ribityllumazine synthase of Citrifermentans bemidjiense (strain ATCC BAA-1014 / DSM 16622 / JCM 12645 / Bem) (Geobacter bemidjiensis).